The chain runs to 294 residues: FLDLQLNATEGNVSGPSVGNTSSPCEDMGIEVEVFLTLGLISLLENILVIGAIARNKNLHVPMYFFVCSLAVADMLVSLSNSWETITIYLIANKHLVLSDTSVRHLDNVFDSMICISLVASMCSLLAVAVDRYVTIFYALRYQHLMTGRRCGAIIAGIWALCTGCGPVFIVYYESTYVVVCLVAMFLTMLLLMASLYAHMFLQARAHVRRIAALPGYRSARQRTSMKGAVTLAMLLGVFIVCWAPFFLHLILMISCPQNLYCSCFMSHFNMYLILIMCNSVIDPLIYAFRSQEK.

The Extracellular segment spans residues 1–29 (FLDLQLNATEGNVSGPSVGNTSSPCEDMG). N-linked (GlcNAc...) asparagine glycosylation is found at Asn7, Asn12, and Asn20. Residues 30 to 53 (IEVEVFLTLGLISLLENILVIGAI) traverse the membrane as a helical segment. At 54-65 (ARNKNLHVPMYF) the chain is on the cytoplasmic side. The helical transmembrane segment at 66–89 (FVCSLAVADMLVSLSNSWETITIY) threads the bilayer. The Extracellular segment spans residues 90–106 (LIANKHLVLSDTSVRHL). Residues 107–130 (DNVFDSMICISLVASMCSLLAVAV) traverse the membrane as a helical segment. Over 131–147 (DRYVTIFYALRYQHLMT) the chain is Cytoplasmic. The helical transmembrane segment at 148 to 171 (GRRCGAIIAGIWALCTGCGPVFIV) threads the bilayer. Residues 172 to 178 (YYESTYV) lie on the Extracellular side of the membrane. The helical transmembrane segment at 179-203 (VVCLVAMFLTMLLLMASLYAHMFLQ) threads the bilayer. Topologically, residues 204–231 (ARAHVRRIAALPGYRSARQRTSMKGAVT) are cytoplasmic. A helical transmembrane segment spans residues 232 to 257 (LAMLLGVFIVCWAPFFLHLILMISCP). The Extracellular portion of the chain corresponds to 258 to 265 (QNLYCSCF). The chain crosses the membrane as a helical span at residues 266–289 (MSHFNMYLILIMCNSVIDPLIYAF). At 290–294 (RSQEK) the chain is on the cytoplasmic side.

Belongs to the G-protein coupled receptor 1 family.

It is found in the cell membrane. In terms of biological role, receptor for MSH (alpha, beta and gamma) and ACTH. The activity of this receptor is mediated by G proteins which activate adenylate cyclase. This receptor is a possible mediator of the immunomodulation properties of melanocortins. The polypeptide is Melanocortin receptor 5 (MC5R) (Sus scrofa (Pig)).